The following is a 389-amino-acid chain: Alpha-2B adrenergic receptor (389 aa).

The chain crosses the membrane as a helical span at residues 1 to 25 (AIAAVITFLILFTIFGNALVILAVL). Over 26–36 (TSRSLRAPQNL) the chain is Cytoplasmic. The chain crosses the membrane as a helical span at residues 37-62 (FLVSLAAADILVATLIIPFSLANELL). The Extracellular portion of the chain corresponds to 63–72 (GYWYFRRTWC). Cys-72 and Cys-151 are joined by a disulfide. The chain crosses the membrane as a helical span at residues 73-95 (EVYLALDVLFCTSSIVHLCAISL). Residues 96–117 (DRYWAVTRALEYNTKRTPRRIK) are Cytoplasmic-facing. The helical transmembrane segment at 118–140 (CIILTVWLIAAVISLPPLIYKGD) threads the bilayer. Residues 141 to 156 (QGPQPRGRPQCKLNQE) are Extracellular-facing. A helical membrane pass occupies residues 157–180 (AWYILASSIGSFFAPCLIMILVYL). The Cytoplasmic portion of the chain corresponds to 181 to 363 (RIYLIAKRSH…LTREKRFTFV (183 aa)). Disordered stretches follow at residues 194 to 216 (PRAK…AGAS) and 233 to 320 (EANG…PLQQ). Positions 196 to 205 (AKGGPGGGGS) are enriched in gly residues. Positions 255-267 (PALPSSWPALPSS) are enriched in low complexity. A compositionally biased stretch (acidic residues) spans 280 to 302 (LEEEAEEEEEEEEEEEEGEEECE). Low complexity predominate over residues 303 to 320 (PQALPASPASACSPPLQQ). A helical transmembrane segment spans residues 364 to 387 (LAVVIGVFVLCWFPFFFSYSLGAI). Residues 388–389 (CP) lie on the Extracellular side of the membrane.

It belongs to the G-protein coupled receptor 1 family. Adrenergic receptor subfamily. ADRA2B sub-subfamily. Interacts with RAB26. Interacts with PPP1R9B. Interacts with GGA1, GGA2 and GGA3.

It localises to the cell membrane. Functionally, alpha-2 adrenergic receptors mediate the catecholamine-induced inhibition of adenylate cyclase through the action of G proteins. The sequence is that of Alpha-2B adrenergic receptor (ADRA2B) from Equus caballus (Horse).